We begin with the raw amino-acid sequence, 273 residues long: Dermonecrotic toxin LhSicTox-alphaIA2aii (273 aa).

H5 is an active-site residue. Mg(2+)-binding residues include E25 and D27. Catalysis depends on H41, which acts as the Nucleophile. 2 cysteine pairs are disulfide-bonded: C45-C51 and C47-C190. Residue D85 coordinates Mg(2+).

The protein belongs to the arthropod phospholipase D family. Class II subfamily. Mg(2+) serves as cofactor. In terms of tissue distribution, expressed by the venom gland.

The protein resides in the secreted. The enzyme catalyses an N-(acyl)-sphingosylphosphocholine = an N-(acyl)-sphingosyl-1,3-cyclic phosphate + choline. It catalyses the reaction an N-(acyl)-sphingosylphosphoethanolamine = an N-(acyl)-sphingosyl-1,3-cyclic phosphate + ethanolamine. It carries out the reaction a 1-acyl-sn-glycero-3-phosphocholine = a 1-acyl-sn-glycero-2,3-cyclic phosphate + choline. The catalysed reaction is a 1-acyl-sn-glycero-3-phosphoethanolamine = a 1-acyl-sn-glycero-2,3-cyclic phosphate + ethanolamine. Its function is as follows. Dermonecrotic toxins cleave the phosphodiester linkage between the phosphate and headgroup of certain phospholipids (sphingolipid and lysolipid substrates), forming an alcohol (often choline) and a cyclic phosphate. This toxin acts on sphingomyelin (SM). It may also act on ceramide phosphoethanolamine (CPE), lysophosphatidylcholine (LPC) and lysophosphatidylethanolamine (LPE), but not on lysophosphatidylserine (LPS), and lysophosphatidylglycerol (LPG). It acts by transphosphatidylation, releasing exclusively cyclic phosphate products as second products. Induces dermonecrosis, hemolysis, increased vascular permeability, edema, inflammatory response, and platelet aggregation. The protein is Dermonecrotic toxin LhSicTox-alphaIA2aii of Loxosceles hirsuta (Recluse spider).